Consider the following 328-residue polypeptide: Ribosomal RNA large subunit methyltransferase F (328 aa).

A disordered region spans residues 1–31 (MTDTRKPPRKKPQRPAKPAAPREKATLHPRN).

This sequence belongs to the methyltransferase superfamily. METTL16/RlmF family.

The protein localises to the cytoplasm. It carries out the reaction adenosine(1618) in 23S rRNA + S-adenosyl-L-methionine = N(6)-methyladenosine(1618) in 23S rRNA + S-adenosyl-L-homocysteine + H(+). In terms of biological role, specifically methylates the adenine in position 1618 of 23S rRNA. This is Ribosomal RNA large subunit methyltransferase F from Pseudomonas savastanoi pv. phaseolicola (strain 1448A / Race 6) (Pseudomonas syringae pv. phaseolicola (strain 1448A / Race 6)).